A 276-amino-acid chain; its full sequence is 3-methyl-2-oxobutanoate hydroxymethyltransferase (276 aa).

Aspartate 45 and aspartate 84 together coordinate Mg(2+). Residues 45 to 46 (DS), aspartate 84, and lysine 114 each bind 3-methyl-2-oxobutanoate. A Mg(2+)-binding site is contributed by glutamate 116. Glutamate 183 functions as the Proton acceptor in the catalytic mechanism.

It belongs to the PanB family. Homodecamer; pentamer of dimers. Mg(2+) is required as a cofactor.

The protein localises to the cytoplasm. The enzyme catalyses 3-methyl-2-oxobutanoate + (6R)-5,10-methylene-5,6,7,8-tetrahydrofolate + H2O = 2-dehydropantoate + (6S)-5,6,7,8-tetrahydrofolate. It functions in the pathway cofactor biosynthesis; (R)-pantothenate biosynthesis; (R)-pantoate from 3-methyl-2-oxobutanoate: step 1/2. In terms of biological role, catalyzes the reversible reaction in which hydroxymethyl group from 5,10-methylenetetrahydrofolate is transferred onto alpha-ketoisovalerate to form ketopantoate. The chain is 3-methyl-2-oxobutanoate hydroxymethyltransferase from Carboxydothermus hydrogenoformans (strain ATCC BAA-161 / DSM 6008 / Z-2901).